The sequence spans 360 residues: Protein MGF 360-1L (360 aa).

This sequence belongs to the asfivirus MGF 360 family.

Functionally, plays a role in virus cell tropism, and may be required for efficient virus replication in macrophages. This is Protein MGF 360-1L from African swine fever virus (strain Badajoz 1971 Vero-adapted) (Ba71V).